Consider the following 209-residue polypeptide: Large ribosomal subunit protein uL3 (209 aa).

The segment at 127–151 is disordered; it reads SGGPSSHGSKFHRHLGGTGQATTPA.

This sequence belongs to the universal ribosomal protein uL3 family. As to quaternary structure, part of the 50S ribosomal subunit. Forms a cluster with proteins L14 and L19.

Its function is as follows. One of the primary rRNA binding proteins, it binds directly near the 3'-end of the 23S rRNA, where it nucleates assembly of the 50S subunit. The polypeptide is Large ribosomal subunit protein uL3 (Borrelia turicatae (strain 91E135)).